A 199-amino-acid chain; its full sequence is Adenylyl-sulfate kinase (199 aa).

The segment at 1-22 is disordered; that stretch reads MSESNHITWHDSEVTKKQRQHK. 34 to 41 is an ATP binding site; that stretch reads GLSGSGKS. Ser108 serves as the catalytic Phosphoserine intermediate.

This sequence belongs to the APS kinase family.

The catalysed reaction is adenosine 5'-phosphosulfate + ATP = 3'-phosphoadenylyl sulfate + ADP + H(+). It functions in the pathway sulfur metabolism; hydrogen sulfide biosynthesis; sulfite from sulfate: step 2/3. In terms of biological role, catalyzes the synthesis of activated sulfate. The protein is Adenylyl-sulfate kinase of Staphylococcus epidermidis (strain ATCC 12228 / FDA PCI 1200).